A 1117-amino-acid chain; its full sequence is RNA-directed RNA polymerase (1117 aa).

Residues 1–17 (MTVSGRSSWQNGKTTNA) are compositionally biased toward polar residues. Positions 1–23 (MTVSGRSSWQNGKTTNAMRAGKL) are disordered.

The catalysed reaction is RNA(n) + a ribonucleoside 5'-triphosphate = RNA(n+1) + diphosphate. RNA-dependent RNA polymerase which replicates the viral genome. In Penicillium chrysogenum (Penicillium notatum), this protein is RNA-directed RNA polymerase (p1).